Reading from the N-terminus, the 387-residue chain is Probable WRKY transcription factor 36 (387 aa).

The WRKY DNA-binding region spans 197–264 (CEDPSINDGC…YEGNHDHPLP (68 aa)). The disordered stretch occupies residues 322–366 (RPNYPNQLPDDYPLSSSSFSLNFSSPDPPPPSSHDHTLNFSGLRT). The segment covering 329–346 (LPDDYPLSSSSFSLNFSS) has biased composition (low complexity).

It is found in the nucleus. Its function is as follows. Transcription factor. Interacts specifically with the W box (5'-(T)TGAC[CT]-3'), a frequently occurring elicitor-responsive cis-acting element. The protein is Probable WRKY transcription factor 36 (WRKY36) of Arabidopsis thaliana (Mouse-ear cress).